We begin with the raw amino-acid sequence, 152 residues long: Protein IpgF (152 aa).

An N-terminal signal peptide occupies residues 1–17 (MSRFVFILLCFIPHLGR).

This sequence belongs to the IagB/IpgF/P19 family.

This is Protein IpgF (ipgF) from Shigella flexneri.